We begin with the raw amino-acid sequence, 461 residues long: Argininosuccinate lyase (461 aa).

3 residues coordinate 2-(N(omega)-L-arginino)succinate: serine 28, asparagine 115, and threonine 160. Residue histidine 161 is the Proton acceptor of the active site. Catalysis depends on serine 282, which acts as the Proton donor. Residues asparagine 290, tyrosine 322, glutamine 327, and lysine 330 each contribute to the 2-(N(omega)-L-arginino)succinate site.

The protein belongs to the lyase 1 family. Argininosuccinate lyase subfamily. Homotetramer.

It carries out the reaction 2-(N(omega)-L-arginino)succinate = fumarate + L-arginine. Its pathway is amino-acid biosynthesis; L-arginine biosynthesis; L-arginine from L-ornithine and carbamoyl phosphate: step 3/3. The sequence is that of Argininosuccinate lyase (arg7) from Schizosaccharomyces pombe (strain 972 / ATCC 24843) (Fission yeast).